A 376-amino-acid chain; its full sequence is Chaperone protein DnaJ (376 aa).

The region spanning 5-69 (DYYEVLGVSK…QKRAQYDQYG (65 aa)) is the J domain. Residues 133–215 (GKDAEIEIPR…CHGKGRVTKT (83 aa)) form a CR-type zinc finger. The Zn(2+) site is built by Cys-146, Cys-149, Cys-163, Cys-166, Cys-189, Cys-192, Cys-203, and Cys-206. CXXCXGXG motif repeat units lie at residues 146 to 153 (CDTCHGSG), 163 to 170 (CSHCGGKG), 189 to 196 (CQYCNGTG), and 203 to 210 (CPTCHGKG).

Belongs to the DnaJ family. Homodimer. The cofactor is Zn(2+).

The protein resides in the cytoplasm. Participates actively in the response to hyperosmotic and heat shock by preventing the aggregation of stress-denatured proteins and by disaggregating proteins, also in an autonomous, DnaK-independent fashion. Unfolded proteins bind initially to DnaJ; upon interaction with the DnaJ-bound protein, DnaK hydrolyzes its bound ATP, resulting in the formation of a stable complex. GrpE releases ADP from DnaK; ATP binding to DnaK triggers the release of the substrate protein, thus completing the reaction cycle. Several rounds of ATP-dependent interactions between DnaJ, DnaK and GrpE are required for fully efficient folding. Also involved, together with DnaK and GrpE, in the DNA replication of plasmids through activation of initiation proteins. This is Chaperone protein DnaJ from Listeria monocytogenes serotype 4b (strain CLIP80459).